The following is a 49-amino-acid chain: Large ribosomal subunit protein bL33 (49 aa).

This sequence belongs to the bacterial ribosomal protein bL33 family.

This is Large ribosomal subunit protein bL33 from Heliobacterium modesticaldum (strain ATCC 51547 / Ice1).